The chain runs to 156 residues: Large ribosomal subunit protein uL15 (156 aa).

Positions 1–13 (MKLNEIKDNEGAT) are enriched in basic and acidic residues. Residues 1–39 (MKLNEIKDNEGATKNRKRLGRGIGSGSGKTAGRGVKGQK) form a disordered region. Gly residues predominate over residues 21–35 (RGIGSGSGKTAGRGV).

This sequence belongs to the universal ribosomal protein uL15 family. As to quaternary structure, part of the 50S ribosomal subunit.

In terms of biological role, binds to the 23S rRNA. The chain is Large ribosomal subunit protein uL15 from Rhizobium meliloti (strain 1021) (Ensifer meliloti).